The following is a 637-amino-acid chain: Phospholipase B (637 aa).

The first 19 residues, 1 to 19 (MSIITTAFALSLLATTAFA), serve as a signal peptide directing secretion. The 527-residue stretch at 46–572 (DCPSNVTWIR…DTWCWAGDDN (527 aa)) folds into the PLA2c domain. N-linked (GlcNAc...) asparagine glycans are attached at residues Asn-50, Asn-56, Asn-122, Asn-231, Asn-246, Asn-272, Asn-314, Asn-343, Asn-387, Asn-433, Asn-481, Asn-501, Asn-528, Asn-553, Asn-572, Asn-594, and Asn-606.

The protein belongs to the lysophospholipase family. N-glycosylated.

Its subcellular location is the secreted. The enzyme catalyses a 1-acyl-sn-glycero-3-phosphocholine + H2O = sn-glycerol 3-phosphocholine + a fatty acid + H(+). Functionally, exhibits phospholipase B (PLB), lysophospholipase (LPL) and lysophospholipase/transacylase (LPTA) activities. The chain is Phospholipase B (PLB1) from Cryptococcus neoformans var. neoformans serotype D (strain B-3501A) (Filobasidiella neoformans).